The primary structure comprises 971 residues: Isoleucine--tRNA ligase (971 aa).

Positions 64 to 74 (PYANGHIHIGH) match the 'HIGH' region motif. Residue Glu-602 participates in L-isoleucyl-5'-AMP binding. A 'KMSKS' region motif is present at residues 643–647 (KMSKS). Position 646 (Lys-646) interacts with ATP.

It belongs to the class-I aminoacyl-tRNA synthetase family. IleS type 1 subfamily. In terms of assembly, monomer.

It localises to the cytoplasm. It carries out the reaction tRNA(Ile) + L-isoleucine + ATP = L-isoleucyl-tRNA(Ile) + AMP + diphosphate. Functionally, catalyzes the attachment of isoleucine to tRNA(Ile). As IleRS can inadvertently accommodate and process structurally similar amino acids such as valine, to avoid such errors it has two additional distinct tRNA(Ile)-dependent editing activities. One activity is designated as 'pretransfer' editing and involves the hydrolysis of activated Val-AMP. The other activity is designated 'posttransfer' editing and involves deacylation of mischarged Val-tRNA(Ile). The sequence is that of Isoleucine--tRNA ligase from Bartonella quintana (strain Toulouse) (Rochalimaea quintana).